The chain runs to 375 residues: Alcohol dehydrogenase B (375 aa).

C40, H62, C92, C95, C98, C106, and C169 together coordinate Zn(2+).

This sequence belongs to the zinc-containing alcohol dehydrogenase family. The cofactor is Zn(2+).

The protein resides in the cytoplasm. It carries out the reaction a primary alcohol + NAD(+) = an aldehyde + NADH + H(+). The catalysed reaction is a secondary alcohol + NAD(+) = a ketone + NADH + H(+). The chain is Alcohol dehydrogenase B (adhB) from Mycobacterium bovis (strain ATCC BAA-935 / AF2122/97).